The primary structure comprises 252 residues: 5'-nucleotidase SurE (252 aa).

4 residues coordinate a divalent metal cation: Asp-8, Asp-9, Ser-40, and Asn-92.

It belongs to the SurE nucleotidase family. The cofactor is a divalent metal cation.

The protein localises to the cytoplasm. It catalyses the reaction a ribonucleoside 5'-phosphate + H2O = a ribonucleoside + phosphate. Its function is as follows. Nucleotidase that shows phosphatase activity on nucleoside 5'-monophosphates. The protein is 5'-nucleotidase SurE of Mesorhizobium japonicum (strain LMG 29417 / CECT 9101 / MAFF 303099) (Mesorhizobium loti (strain MAFF 303099)).